The sequence spans 370 residues: 3-dehydroquinate synthase (370 aa).

NAD(+) contacts are provided by residues 108 to 112 (GVIGD), 132 to 133 (TT), lysine 145, and lysine 154. Positions 187, 249, and 267 each coordinate Zn(2+).

It belongs to the sugar phosphate cyclases superfamily. Dehydroquinate synthase family. The cofactor is Co(2+). It depends on Zn(2+) as a cofactor. Requires NAD(+) as cofactor.

The protein resides in the cytoplasm. The catalysed reaction is 7-phospho-2-dehydro-3-deoxy-D-arabino-heptonate = 3-dehydroquinate + phosphate. Its pathway is metabolic intermediate biosynthesis; chorismate biosynthesis; chorismate from D-erythrose 4-phosphate and phosphoenolpyruvate: step 2/7. In terms of biological role, catalyzes the conversion of 3-deoxy-D-arabino-heptulosonate 7-phosphate (DAHP) to dehydroquinate (DHQ). The sequence is that of 3-dehydroquinate synthase from Cereibacter sphaeroides (strain ATCC 17023 / DSM 158 / JCM 6121 / CCUG 31486 / LMG 2827 / NBRC 12203 / NCIMB 8253 / ATH 2.4.1.) (Rhodobacter sphaeroides).